The primary structure comprises 80 residues: MNCYLILTVALLLTSAMTGTTTAGQLNTKGVTLREDDRTFPCSSGLCACLPLDSYSYICLSPSSSTANCENDECISEDDW.

A signal peptide spans 1 to 23 (MNCYLILTVALLLTSAMTGTTTA). Residues 24–37 (GQLNTKGVTLREDD) constitute a propeptide that is removed on maturation. 3 cysteine pairs are disulfide-bonded: cysteine 42–cysteine 59, cysteine 47–cysteine 69, and cysteine 49–cysteine 74.

In terms of tissue distribution, expressed by the venom duct.

It is found in the secreted. This chain is Conotoxin Cl9.5, found in Californiconus californicus (California cone).